The chain runs to 59 residues: Large ribosomal subunit protein uL30 (59 aa).

Belongs to the universal ribosomal protein uL30 family. In terms of assembly, part of the 50S ribosomal subunit.

This is Large ribosomal subunit protein uL30 from Staphylococcus saprophyticus subsp. saprophyticus (strain ATCC 15305 / DSM 20229 / NCIMB 8711 / NCTC 7292 / S-41).